A 282-amino-acid chain; its full sequence is Protoheme IX farnesyltransferase (282 aa).

9 consecutive transmembrane segments (helical) span residues 9–29 (LAKP…FLLA), 39–59 (LPLF…GCVF), 79–99 (LVTG…LLIL), 102–122 (LVLY…GFIV), 139–159 (VLGG…VVNI), 165–185 (LALF…IAML), 210–230 (IMLF…VLGS), 231–251 (ADLF…YKSI), and 261–281 (VFAK…CLTM).

This sequence belongs to the UbiA prenyltransferase family. Protoheme IX farnesyltransferase subfamily.

It is found in the cell inner membrane. The catalysed reaction is heme b + (2E,6E)-farnesyl diphosphate + H2O = Fe(II)-heme o + diphosphate. It participates in porphyrin-containing compound metabolism; heme O biosynthesis; heme O from protoheme: step 1/1. In terms of biological role, converts heme B (protoheme IX) to heme O by substitution of the vinyl group on carbon 2 of heme B porphyrin ring with a hydroxyethyl farnesyl side group. The protein is Protoheme IX farnesyltransferase of Francisella tularensis subsp. holarctica (strain LVS).